A 299-amino-acid chain; its full sequence is Oxygen-dependent coproporphyrinogen-III oxidase (299 aa).

Ser92 serves as a coordination point for substrate. His96 and His106 together coordinate a divalent metal cation. The active-site Proton donor is the His106. 108-110 (NVR) lines the substrate pocket. The a divalent metal cation site is built by His145 and His175. The interval 240–275 (YVEFNLVWDRGTLFGLQTGGRTESILMSMPPLVRWE) is important for dimerization. A substrate-binding site is contributed by 258–260 (GGR).

Belongs to the aerobic coproporphyrinogen-III oxidase family. As to quaternary structure, homodimer. The cofactor is a divalent metal cation.

Its subcellular location is the cytoplasm. The catalysed reaction is coproporphyrinogen III + O2 + 2 H(+) = protoporphyrinogen IX + 2 CO2 + 2 H2O. The protein operates within porphyrin-containing compound metabolism; protoporphyrin-IX biosynthesis; protoporphyrinogen-IX from coproporphyrinogen-III (O2 route): step 1/1. Involved in the heme biosynthesis. Catalyzes the aerobic oxidative decarboxylation of propionate groups of rings A and B of coproporphyrinogen-III to yield the vinyl groups in protoporphyrinogen-IX. The sequence is that of Oxygen-dependent coproporphyrinogen-III oxidase from Shigella dysenteriae serotype 1 (strain Sd197).